Here is a 508-residue protein sequence, read N- to C-terminus: Histone acetyltransferase type B catalytic subunit (508 aa).

2 interaction with histone H4 N-terminus regions span residues 44–46 (EKE) and 207–209 (YRY). Acetyl-CoA contacts are provided by residues 249–251 (FII) and 256–262 (QQKGLGS). The Proton donor/acceptor role is filled by Glu284. 2 disordered regions span residues 364–399 (SVRPGLGAPEDEDYEEQSGRSKSKGHEKALPKPTPE) and 461–508 (QADG…SGHA). Over residues 387-399 (KGHEKALPKPTPE) the composition is skewed to basic and acidic residues.

Belongs to the HAT1 family. Component of the HAT-B complex composed of at least hat-1 and hat-2. The HAT-B complex binds to histone H4 tail.

The protein resides in the cytoplasm. It localises to the nucleus. It carries out the reaction L-lysyl-[protein] + acetyl-CoA = N(6)-acetyl-L-lysyl-[protein] + CoA + H(+). Its function is as follows. Catalytic component of the histone acetylase B (HAT-B) complex. Acetylates 'Lys-12' of histone H4 which is required for telomeric silencing. Has intrinsic substrate specificity that modifies lysine in recognition sequence GXGKXG. Involved in DNA double-strand break repair. This chain is Histone acetyltransferase type B catalytic subunit (hat-1), found in Neurospora crassa (strain ATCC 24698 / 74-OR23-1A / CBS 708.71 / DSM 1257 / FGSC 987).